Consider the following 353-residue polypeptide: Probable arabinan endo-1,5-alpha-L-arabinosidase B (353 aa).

Positions methionine 1–cysteine 16 are cleaved as a signal peptide. Aspartate 39 functions as the Proton acceptor in the catalytic mechanism. Asparagine 194 carries N-linked (GlcNAc...) asparagine glycosylation. Residues histidine 202–serine 227 are disordered. Catalysis depends on glutamate 233, which acts as the Proton donor.

Belongs to the glycosyl hydrolase 43 family.

The protein resides in the secreted. The enzyme catalyses Endohydrolysis of (1-&gt;5)-alpha-arabinofuranosidic linkages in (1-&gt;5)-arabinans.. It functions in the pathway glycan metabolism; L-arabinan degradation. Its function is as follows. Endo-1,5-alpha-L-arabinanase involved in degradation of pectin. Its preferred substrate is linear 1,5-alpha-L-arabinan. The chain is Probable arabinan endo-1,5-alpha-L-arabinosidase B (abnB) from Aspergillus oryzae (strain ATCC 42149 / RIB 40) (Yellow koji mold).